Here is a 443-residue protein sequence, read N- to C-terminus: Glutamate-rich protein 1 (443 aa).

K12 is subject to N6-acetyllysine. The segment at 15–333 is disordered; sequence QRLFPPVPSG…DASEEDDTIT (319 aa). A compositionally biased stretch (basic and acidic residues) spans 42-54; that stretch reads VTSEKVSQKHAEP. The segment covering 87-97 has biased composition (polar residues); sequence SCGSPENASSG. Basic residues-rich tracts occupy residues 109–124 and 159–176; these read PKRRRIRKHKSKKKFK and KNKKRKLKKKQQIKRKKA. Positions 205 to 226 are enriched in acidic residues; it reads ACEEDGVDTSEEDPTLAGEEDV. S238 and S254 each carry phosphoserine. Residues 250–266 show a composition bias toward acidic residues; that stretch reads GADASEEDPTPAGEEDV. A Phosphothreonine modification is found at T277. Over residues 281 to 296 the composition is skewed to basic and acidic residues; the sequence is DLTRAGEEDGKDTREE. Acidic residues predominate over residues 297-332; that stretch reads DGADASEEDPTWAGEEEGADSGEEDGADASEEDDTI.

This chain is Glutamate-rich protein 1 (ERICH1), found in Homo sapiens (Human).